The chain runs to 66 residues: ATP synthase subunit c (66 aa).

Transmembrane regions (helical) follow at residues 3-23 and 45-65; these read LTFLGLCIACMGVSVGEGLLM and FLGVAFIEGTFFVTLVFSFII.

Belongs to the ATPase C chain family. F-type ATPases have 2 components, F(1) - the catalytic core - and F(0) - the membrane proton channel. F(1) has five subunits: alpha(3), beta(3), gamma(1), delta(1), epsilon(1). F(0) has three main subunits: a(1), b(2) and c(10-14). The alpha and beta chains form an alternating ring which encloses part of the gamma chain. F(1) is attached to F(0) by a central stalk formed by the gamma and epsilon chains, while a peripheral stalk is formed by the delta and b chains.

It localises to the cell membrane. Its function is as follows. F(1)F(0) ATP synthase produces ATP from ADP in the presence of a proton or sodium gradient. F-type ATPases consist of two structural domains, F(1) containing the extramembraneous catalytic core and F(0) containing the membrane proton channel, linked together by a central stalk and a peripheral stalk. During catalysis, ATP synthesis in the catalytic domain of F(1) is coupled via a rotary mechanism of the central stalk subunits to proton translocation. In terms of biological role, key component of the F(0) channel; it plays a direct role in translocation across the membrane. A homomeric c-ring of between 10-14 subunits forms the central stalk rotor element with the F(1) delta and epsilon subunits. The chain is ATP synthase subunit c from Streptococcus pneumoniae serotype 19F (strain G54).